Here is a 254-residue protein sequence, read N- to C-terminus: Sugar fermentation stimulation protein homolog (254 aa).

It belongs to the SfsA family.

The protein is Sugar fermentation stimulation protein homolog of Parasynechococcus marenigrum (strain WH8102).